A 347-amino-acid chain; its full sequence is Protein RecA (347 aa).

65–72 (GPESSGKT) is an ATP binding site. The segment covering 327-336 (KFEPTELSRE) has biased composition (basic and acidic residues). Residues 327–347 (KFEPTELSREEGDEDTLEDTM) form a disordered region. The segment covering 337 to 347 (EGDEDTLEDTM) has biased composition (acidic residues).

The protein belongs to the RecA family.

It localises to the cytoplasm. Functionally, can catalyze the hydrolysis of ATP in the presence of single-stranded DNA, the ATP-dependent uptake of single-stranded DNA by duplex DNA, and the ATP-dependent hybridization of homologous single-stranded DNAs. It interacts with LexA causing its activation and leading to its autocatalytic cleavage. In Xylella fastidiosa (strain 9a5c), this protein is Protein RecA.